Reading from the N-terminus, the 143-residue chain is Anti-sigma F factor (143 aa).

It belongs to the anti-sigma-factor family.

It carries out the reaction L-seryl-[protein] + ATP = O-phospho-L-seryl-[protein] + ADP + H(+). The enzyme catalyses L-threonyl-[protein] + ATP = O-phospho-L-threonyl-[protein] + ADP + H(+). Functionally, binds to sigma F and blocks its ability to form an RNA polymerase holoenzyme (E-sigma F). Phosphorylates SpoIIAA on a serine residue. This phosphorylation may enable SpoIIAA to act as an anti-anti-sigma factor that counteracts SpoIIAB and thus releases sigma F from inhibition. This is Anti-sigma F factor from Clostridium botulinum (strain Alaska E43 / Type E3).